Consider the following 74-residue polypeptide: Translation initiation factor IF-1 (74 aa).

Residues 1-72 (MSKEDAIEVE…NKGRITYRLK (72 aa)) form the S1-like domain.

It belongs to the IF-1 family. In terms of assembly, component of the 30S ribosomal translation pre-initiation complex which assembles on the 30S ribosome in the order IF-2 and IF-3, IF-1 and N-formylmethionyl-tRNA(fMet); mRNA recruitment can occur at any time during PIC assembly.

It is found in the cytoplasm. One of the essential components for the initiation of protein synthesis. Stabilizes the binding of IF-2 and IF-3 on the 30S subunit to which N-formylmethionyl-tRNA(fMet) subsequently binds. Helps modulate mRNA selection, yielding the 30S pre-initiation complex (PIC). Upon addition of the 50S ribosomal subunit IF-1, IF-2 and IF-3 are released leaving the mature 70S translation initiation complex. The protein is Translation initiation factor IF-1 of Synechococcus sp. (strain JA-3-3Ab) (Cyanobacteria bacterium Yellowstone A-Prime).